The sequence spans 823 residues: Spindle pole body component SPC97 (823 aa).

This sequence belongs to the TUBGCP family. Interacts with TUB4, SPC72 and SPC98.

It is found in the nucleus. The protein localises to the cytoplasm. Its subcellular location is the cytoskeleton. The protein resides in the microtubule organizing center. It localises to the spindle pole body. Its function is as follows. Involved in microtubule organization by the microtubule organizing center, the spindle pole body (SPB). Probably part of the microtubule attachment site at the SPB. The chain is Spindle pole body component SPC97 (SPC97) from Saccharomyces cerevisiae (strain ATCC 204508 / S288c) (Baker's yeast).